The chain runs to 304 residues: Nucleotide-binding protein KRH_12070 (304 aa).

27-34 serves as a coordination point for ATP; that stretch reads GMSGAGRS. GTP is bound at residue 78-81; the sequence is DVRG.

Belongs to the RapZ-like family.

Displays ATPase and GTPase activities. The polypeptide is Nucleotide-binding protein KRH_12070 (Kocuria rhizophila (strain ATCC 9341 / DSM 348 / NBRC 103217 / DC2201)).